A 95-amino-acid chain; its full sequence is Aspartyl/glutamyl-tRNA(Asn/Gln) amidotransferase subunit C (95 aa).

Belongs to the GatC family. As to quaternary structure, heterotrimer of A, B and C subunits.

The catalysed reaction is L-glutamyl-tRNA(Gln) + L-glutamine + ATP + H2O = L-glutaminyl-tRNA(Gln) + L-glutamate + ADP + phosphate + H(+). It catalyses the reaction L-aspartyl-tRNA(Asn) + L-glutamine + ATP + H2O = L-asparaginyl-tRNA(Asn) + L-glutamate + ADP + phosphate + 2 H(+). Functionally, allows the formation of correctly charged Asn-tRNA(Asn) or Gln-tRNA(Gln) through the transamidation of misacylated Asp-tRNA(Asn) or Glu-tRNA(Gln) in organisms which lack either or both of asparaginyl-tRNA or glutaminyl-tRNA synthetases. The reaction takes place in the presence of glutamine and ATP through an activated phospho-Asp-tRNA(Asn) or phospho-Glu-tRNA(Gln). The protein is Aspartyl/glutamyl-tRNA(Asn/Gln) amidotransferase subunit C of Ruegeria sp. (strain TM1040) (Silicibacter sp.).